A 181-amino-acid chain; its full sequence is MASQIRHNYHEDCEPINKQINLEFYASYVYMSMGHYFDRDDISLPGASKFFKDSSDEEREHGQKLMKYQNKRGARIVLQAIAAPSLQEWGNLHDALQAALDLENEVNQSLLDLDATASKINDPHLTNMLEGEFLEEQVESIEKIGNLITRLKRAGTSGLGEFLFDKELKQRFLPSLTSHPN.

In terms of domain architecture, Ferritin-like diiron spans 6 to 155 (RHNYHEDCEP…NLITRLKRAG (150 aa)). Fe cation contacts are provided by E23, E58, H61, E103, and Q137.

Belongs to the ferritin family. In terms of assembly, oligomer of 12 or 24 subunits. The functional molecule is roughly spherical and contains a central cavity into which the polymeric mineral iron core is deposited. In terms of processing, the N-terminus is blocked.

Its subcellular location is the cytoplasm. The catalysed reaction is 4 Fe(2+) + O2 + 4 H(+) = 4 Fe(3+) + 2 H2O. In terms of biological role, stores iron in a soluble, non-toxic, readily available form. Important for iron homeostasis. Has ferroxidase activity. Iron is taken up in the ferrous form and deposited as ferric hydroxides after oxidation. The protein is Ferritin of Pacifastacus leniusculus (Signal crayfish).